The following is a 329-amino-acid chain: tRNA dimethylallyltransferase (329 aa).

Position 12-19 (12-19 (GPTSVGKT)) interacts with ATP. 14–19 (TSVGKT) is a binding site for substrate. Residues 37 to 40 (DSRY) form an interaction with substrate tRNA region. Residues 306 to 329 (LREESDEGDVAVHQSGGGKEAPRA) form a disordered region. Gly residues predominate over residues 320–329 (SGGGKEAPRA).

It belongs to the IPP transferase family. As to quaternary structure, monomer. Requires Mg(2+) as cofactor.

The enzyme catalyses adenosine(37) in tRNA + dimethylallyl diphosphate = N(6)-dimethylallyladenosine(37) in tRNA + diphosphate. Its function is as follows. Catalyzes the transfer of a dimethylallyl group onto the adenine at position 37 in tRNAs that read codons beginning with uridine, leading to the formation of N6-(dimethylallyl)adenosine (i(6)A). The sequence is that of tRNA dimethylallyltransferase from Thermomicrobium roseum (strain ATCC 27502 / DSM 5159 / P-2).